The primary structure comprises 376 residues: Queuine tRNA-ribosyltransferase (376 aa).

The active-site Proton acceptor is D89. Substrate is bound by residues 89-93, D143, Q194, and G221; that span reads DSGGF. The RNA binding stretch occupies residues 252–258; the sequence is GVGTPAN. The active-site Nucleophile is D271. 4 residues coordinate Zn(2+): C309, C311, C314, and H340.

Belongs to the queuine tRNA-ribosyltransferase family. In terms of assembly, homodimer. Within each dimer, one monomer is responsible for RNA recognition and catalysis, while the other monomer binds to the replacement base PreQ1. Requires Zn(2+) as cofactor.

The enzyme catalyses 7-aminomethyl-7-carbaguanine + guanosine(34) in tRNA = 7-aminomethyl-7-carbaguanosine(34) in tRNA + guanine. The protein operates within tRNA modification; tRNA-queuosine biosynthesis. Its function is as follows. Catalyzes the base-exchange of a guanine (G) residue with the queuine precursor 7-aminomethyl-7-deazaguanine (PreQ1) at position 34 (anticodon wobble position) in tRNAs with GU(N) anticodons (tRNA-Asp, -Asn, -His and -Tyr). Catalysis occurs through a double-displacement mechanism. The nucleophile active site attacks the C1' of nucleotide 34 to detach the guanine base from the RNA, forming a covalent enzyme-RNA intermediate. The proton acceptor active site deprotonates the incoming PreQ1, allowing a nucleophilic attack on the C1' of the ribose to form the product. After dissociation, two additional enzymatic reactions on the tRNA convert PreQ1 to queuine (Q), resulting in the hypermodified nucleoside queuosine (7-(((4,5-cis-dihydroxy-2-cyclopenten-1-yl)amino)methyl)-7-deazaguanosine). This chain is Queuine tRNA-ribosyltransferase, found in Clostridium kluyveri (strain NBRC 12016).